The sequence spans 159 residues: NAD(P)H-quinone oxidoreductase subunit N (159 aa).

The protein belongs to the complex I NdhN subunit family. As to quaternary structure, NDH-1 can be composed of about 15 different subunits; different subcomplexes with different compositions have been identified which probably have different functions.

It is found in the cell inner membrane. It carries out the reaction a plastoquinone + NADH + (n+1) H(+)(in) = a plastoquinol + NAD(+) + n H(+)(out). The catalysed reaction is a plastoquinone + NADPH + (n+1) H(+)(in) = a plastoquinol + NADP(+) + n H(+)(out). In terms of biological role, NDH-1 shuttles electrons from an unknown electron donor, via FMN and iron-sulfur (Fe-S) centers, to quinones in the respiratory and/or the photosynthetic chain. The immediate electron acceptor for the enzyme in this species is believed to be plastoquinone. Couples the redox reaction to proton translocation, and thus conserves the redox energy in a proton gradient. Cyanobacterial NDH-1 also plays a role in inorganic carbon-concentration. This chain is NAD(P)H-quinone oxidoreductase subunit N, found in Gloeobacter violaceus (strain ATCC 29082 / PCC 7421).